Consider the following 411-residue polypeptide: uncharacterized protein (411 aa).

The protein belongs to the peptidase M20 family.

This is an uncharacterized protein from Haemophilus influenzae (strain ATCC 51907 / DSM 11121 / KW20 / Rd).